We begin with the raw amino-acid sequence, 229 residues long: Ras-related protein Rab-33B (229 aa).

GTP-binding residues include Asn43, Val44, Gly45, Lys46, Thr47, Cys48, Thr62, and Thr65. A Mg(2+)-binding site is contributed by Thr47. The short motif at 56–68 is the Switch 1 element; that stretch reads GRFPDRTEATIGV. Residues Thr65 and Asp88 each coordinate Mg(2+). Residues 89-108 carry the Switch 2 motif; the sequence is TAGQERFRKSMVQHYYRNVH. GTP is bound by residues Gly91, Asn148, Lys149, Asp151, Ala179, and Lys180. S-geranylgeranyl cysteine attachment occurs at residues Cys227 and Cys229. The residue at position 229 (Cys229) is a Cysteine methyl ester.

Belongs to the small GTPase superfamily. Rab family. As to quaternary structure, interacts (GTP- and GDP-bound forms) with ATG16L1; the complex consists of a tetramer where two RAB33B molecules bind independently one molecule of the ATG16L1 homodimer; the interaction promotes ATG12-ATG5-ATG16L1 complex recruitment to phagophores. Interacts with ATG16L2; however interaction is approximately hundred times lower than for ATG16L1. Interacts with RIC1 (via C-terminus domain); the interaction is direct with a preference for RAB33B-GTP. Interacts with RGP1. The cofactor is Mg(2+). Prenylated.

It is found in the golgi apparatus membrane. The protein localises to the golgi apparatus. Its subcellular location is the cis-Golgi network. The protein resides in the preautophagosomal structure membrane. It catalyses the reaction GTP + H2O = GDP + phosphate + H(+). Its activity is regulated as follows. Regulated by guanine nucleotide exchange factors (GEFs) which promote the exchange of bound GDP for free GTP. Regulated by GTPase activating proteins (GAPs) such as SGSM2 which increase the GTP hydrolysis activity. Inhibited by GDP dissociation inhibitors (GDIs). Its function is as follows. The small GTPases Rab are key regulators of intracellular membrane trafficking, from the formation of transport vesicles to their fusion with membranes. Rabs cycle between an inactive GDP-bound form and an active GTP-bound form that is able to recruit to membranes different sets of downstream effectors directly responsible for vesicle formation, movement, tethering and fusion. RAB33B acts, in coordination with RAB6A, to regulate intra-Golgi retrograde trafficking. Participates in autophagosome formation by recruiting the ATG12-ATG5-ATG16L1 complex to phagophores, probably in a nucleotide-independent manner. The polypeptide is Ras-related protein Rab-33B (Homo sapiens (Human)).